Consider the following 92-residue polypeptide: MQKAVQLDVFGRVQGVGFRWTTKLVADRLGITGTVSNQPDGSVKIIAMGPDAILEQFIGAVKASPTPSGRVDRVVQTPLQDVSACHKFSVVG.

One can recognise an Acylphosphatase-like domain in the interval 4–92 (AVQLDVFGRV…SACHKFSVVG (89 aa)). Active-site residues include R19 and N37.

Belongs to the acylphosphatase family.

The enzyme catalyses an acyl phosphate + H2O = a carboxylate + phosphate + H(+). This Latilactobacillus sakei subsp. sakei (strain 23K) (Lactobacillus sakei subsp. sakei) protein is Acylphosphatase (acyP).